The primary structure comprises 479 residues: Altronate oxidoreductase (479 aa).

18-29 serves as a coordination point for NAD(+); the sequence is IIQFGEGNFLRA.

It belongs to the mannitol dehydrogenase family. UxaB subfamily.

The catalysed reaction is D-altronate + NAD(+) = keto-D-tagaturonate + NADH + H(+). Its pathway is carbohydrate metabolism; pentose and glucuronate interconversion. The chain is Altronate oxidoreductase from Bacteroides thetaiotaomicron (strain ATCC 29148 / DSM 2079 / JCM 5827 / CCUG 10774 / NCTC 10582 / VPI-5482 / E50).